Reading from the N-terminus, the 692-residue chain is NAD(P)H-quinone oxidoreductase subunit 5, chloroplastic (692 aa).

Helical transmembrane passes span 9 to 29, 39 to 59, 89 to 109, 120 to 140, 147 to 167, 184 to 204, 219 to 239, 258 to 278, 289 to 309, 327 to 347, 354 to 374, 395 to 415, 425 to 445, 503 to 523, 555 to 575, 643 to 663, and 671 to 691; these read WFVP…LFFF, LSSF…FHFF, LDPL…MVMI, GYIK…GLVL, VYIF…FWFT, IGDF…GSFD, NQIN…GPVA, TPIS…FLVA, FVMS…ATIA, LGYM…FHLI, ALLF…VGYH, AITF…ACFW, WLHF…TAFY, LFPL…GILF, FLFN…IAFY, WIID…GESL, and ISSY…YSYI.

This sequence belongs to the complex I subunit 5 family. As to quaternary structure, NDH is composed of at least 16 different subunits, 5 of which are encoded in the nucleus.

The protein resides in the plastid. Its subcellular location is the chloroplast thylakoid membrane. It carries out the reaction a plastoquinone + NADH + (n+1) H(+)(in) = a plastoquinol + NAD(+) + n H(+)(out). It catalyses the reaction a plastoquinone + NADPH + (n+1) H(+)(in) = a plastoquinol + NADP(+) + n H(+)(out). In terms of biological role, NDH shuttles electrons from NAD(P)H:plastoquinone, via FMN and iron-sulfur (Fe-S) centers, to quinones in the photosynthetic chain and possibly in a chloroplast respiratory chain. The immediate electron acceptor for the enzyme in this species is believed to be plastoquinone. Couples the redox reaction to proton translocation, and thus conserves the redox energy in a proton gradient. In Marchantia polymorpha (Common liverwort), this protein is NAD(P)H-quinone oxidoreductase subunit 5, chloroplastic (ndhF).